A 266-amino-acid chain; its full sequence is Integral membrane protein 2B (266 aa).

Topologically, residues 1–54 (MVKVTFNSALAQKEAKKXEPKSGEEALIIPPDTXAVDCKDPDEVVPVGQRRAWC) are cytoplasmic. The helical; Signal-anchor for type II membrane protein transmembrane segment at 55-75 (WCMCFGLAFMLAGVILGGAYL) threads the bilayer. At 76–266 (YKYFALQPDD…KFAVETLICS (191 aa)) the chain is on the lumenal side. Residues 102–134 (EPPANAPAARYQTIEENIKIFEEDGVEFISVPV) are necessary for interaction with APP and inhibitor effects on APP processing. The BRICHOS domain maps to 137-231 (FADSDPANIV…LCHDKETYKL (95 aa)). Intrachain disulfides connect cysteine 164-cysteine 223 and cysteine 248-cysteine 265. N-linked (GlcNAc...) asparagine glycosylation occurs at asparagine 170.

It belongs to the ITM2 family. As to quaternary structure, homodimer; disulfide-linked. Interacts with SPPL2A and SPPL2B. Interacts with APP. Mature BRI2 (mBRI2) interacts with the APP amyloid-beta A4 protein; the interaction occurs at the cell surface and in the endocytic compartments and enable alpha- and beta-secretase-induced APP cleavage inhibition. Mature BRI2 (mBRI2) interacts with the APP C99; the interaction occurs in the endocytic compartments and enable gamma-secretase-induced C99 cleavage inhibition. May form heterodimers with Bri23 peptide and APP amyloid-beta protein 40. Interacts with ADAM7 in sperm; the interaction increases following capacitation. Post-translationally, the ectodomain C-terminal part of the imBRI2 is processed by furin producing a secreted Bri23 peptide and a mature BRI2, membrane form (mBRI2). The remaining part of the ectodomain of mBRI2 containing the BRICHOS domain is cleaved by ADAM10 and is secreted (BRI2C, soluble form). The membrane-bound N-terminal fragment (BRI2C, membrane form) is further proteolytically processed by SPPL2A and SPPL2B through regulated intramembrane proteolysis producing a secreted C-peptide and a BRI2 intracellular domain (BRI2 ICD) released in the cytosol. Shedding by ADAM10 facilitates intramembrane cleavage but is not absolutely required for BRI2 ICD generation. Glycosylation at Asn-170 is important for cell surface localization, but doesn't affect furin- and ADAM10-induced proteolytic processing.

It is found in the golgi apparatus membrane. The protein resides in the cell membrane. It localises to the endosome membrane. The protein localises to the secreted. Plays a regulatory role in the processing of the amyloid-beta A4 precursor protein (APP) and acts as an inhibitor of the amyloid-beta peptide aggregation and fibrils deposition. Plays a role in the induction of neurite outgrowth. Functions as a protease inhibitor by blocking access of secretases to APP cleavage sites. In terms of biological role, mature BRI2 (mBRI2) functions as a modulator of the amyloid-beta A4 precursor protein (APP) processing leading to a strong reduction in the secretion of secretase-processed amyloid-beta protein 40 and amyloid-beta protein 42. Functionally, bri23 peptide prevents aggregation of APP amyloid-beta protein 42 into toxic oligomers. The chain is Integral membrane protein 2B (ITM2B) from Sus scrofa (Pig).